Here is a 458-residue protein sequence, read N- to C-terminus: Argininosuccinate lyase (458 aa).

The protein belongs to the lyase 1 family. Argininosuccinate lyase subfamily.

The protein localises to the cytoplasm. It carries out the reaction 2-(N(omega)-L-arginino)succinate = fumarate + L-arginine. The protein operates within amino-acid biosynthesis; L-arginine biosynthesis; L-arginine from L-ornithine and carbamoyl phosphate: step 3/3. The protein is Argininosuccinate lyase of Actinobacillus pleuropneumoniae serotype 7 (strain AP76).